Reading from the N-terminus, the 750-residue chain is Methylmalonyl-CoA mutase, mitochondrial (750 aa).

The transit peptide at methionine 1–leucine 32 directs the protein to the mitochondrion. Residue glutamine 50 coordinates malonyl-CoA. Lysine 89 is modified (N6-acetyllysine). Malonyl-CoA-binding positions include tyrosine 96–methionine 99 and threonine 106–tyrosine 110. Lysine 212 bears the N6-acetyllysine mark. Residues threonine 216 to glutamine 218, arginine 228, lysine 255, histidine 265, and arginine 304 to serine 306 each bind malonyl-CoA. Lysine 335 bears the N6-acetyllysine mark. An N6-succinyllysine modification is found at lysine 343. Serine 481 carries the post-translational modification Phosphoserine. Lysine 595 carries the post-translational modification N6-succinyllysine. An N6-acetyllysine modification is found at lysine 602. Positions arginine 614–lysine 746 constitute a B12-binding domain. Histidine 627 lines the adenosylcob(III)alamin pocket.

The protein belongs to the methylmalonyl-CoA mutase family. In terms of assembly, homodimer. Interacts (the apoenzyme form) with MMAA; the interaction is GTP dependent. The cofactor is adenosylcob(III)alamin.

It localises to the mitochondrion matrix. The protein resides in the mitochondrion. It is found in the cytoplasm. It catalyses the reaction (R)-methylmalonyl-CoA = succinyl-CoA. Its activity is regulated as follows. Inhibited by itaconyl-CoA, a metabolite that inactivates the coenzyme B12 cofactor. Catalyzes the reversible isomerization of methylmalonyl-CoA (MMCoA) (generated from branched-chain amino acid metabolism and degradation of dietary odd chain fatty acids and cholesterol) to succinyl-CoA (3-carboxypropionyl-CoA), a key intermediate of the tricarboxylic acid cycle. This is Methylmalonyl-CoA mutase, mitochondrial (MMUT) from Pongo abelii (Sumatran orangutan).